Consider the following 364-residue polypeptide: Methylthioribose-1-phosphate isomerase (364 aa).

Residues 49 to 51 (RGA), Arg-89, and Gln-201 contribute to the substrate site. The active-site Proton donor is the Asp-242. Residue 252 to 253 (NK) coordinates substrate.

This sequence belongs to the eIF-2B alpha/beta/delta subunits family. MtnA subfamily.

The enzyme catalyses 5-(methylsulfanyl)-alpha-D-ribose 1-phosphate = 5-(methylsulfanyl)-D-ribulose 1-phosphate. The protein operates within amino-acid biosynthesis; L-methionine biosynthesis via salvage pathway; L-methionine from S-methyl-5-thio-alpha-D-ribose 1-phosphate: step 1/6. In terms of biological role, catalyzes the interconversion of methylthioribose-1-phosphate (MTR-1-P) into methylthioribulose-1-phosphate (MTRu-1-P). This chain is Methylthioribose-1-phosphate isomerase, found in Leptospira interrogans serogroup Icterohaemorrhagiae serovar Lai (strain 56601).